The following is a 163-amino-acid chain: GTP-dependent dephospho-CoA kinase (163 aa).

5 residues coordinate GTP: Asp38, Val39, Asp57, Glu115, and Asp138.

Belongs to the GTP-dependent DPCK family.

The enzyme catalyses 3'-dephospho-CoA + GTP = GDP + CoA + H(+). It functions in the pathway cofactor biosynthesis; coenzyme A biosynthesis. Functionally, catalyzes the GTP-dependent phosphorylation of the 3'-hydroxyl group of dephosphocoenzyme A to form coenzyme A (CoA). The protein is GTP-dependent dephospho-CoA kinase of Methanothermobacter thermautotrophicus (strain ATCC 29096 / DSM 1053 / JCM 10044 / NBRC 100330 / Delta H) (Methanobacterium thermoautotrophicum).